The following is a 388-amino-acid chain: Chorismate synthase (388 aa).

NADP(+)-binding residues include R39 and R45. Residues R130 to S132, N251 to A252, A296, K311 to T315, and R337 each bind FMN.

It belongs to the chorismate synthase family. As to quaternary structure, homotetramer. Requires FMNH2 as cofactor.

It catalyses the reaction 5-O-(1-carboxyvinyl)-3-phosphoshikimate = chorismate + phosphate. The protein operates within metabolic intermediate biosynthesis; chorismate biosynthesis; chorismate from D-erythrose 4-phosphate and phosphoenolpyruvate: step 7/7. Catalyzes the anti-1,4-elimination of the C-3 phosphate and the C-6 proR hydrogen from 5-enolpyruvylshikimate-3-phosphate (EPSP) to yield chorismate, which is the branch point compound that serves as the starting substrate for the three terminal pathways of aromatic amino acid biosynthesis. This reaction introduces a second double bond into the aromatic ring system. This is Chorismate synthase from Streptococcus equi subsp. zooepidemicus (strain MGCS10565).